The following is a 298-amino-acid chain: Pheromone-regulated membrane protein 9 (298 aa).

At 1–111 (MSPQYHFYFV…YWIYEVTRHK (111 aa)) the chain is on the cytoplasmic side. The chain crosses the membrane as a helical span at residues 112–132 (AAVILLVLIVTSILLLVFFYN). The Extracellular portion of the chain corresponds to 133-137 (TEFCV). The chain crosses the membrane as a helical span at residues 138–158 (AFEILLFSFCFPGTCMVVIAF). Over 159–298 (SEPIGDREFK…QEYPGVDEFF (140 aa)) the chain is Cytoplasmic. Positions 235-262 (SSASNVKDAQSNDETAGTPNEAAESSSF) are disordered. The tract at residues 297–298 (FF) is COPII binding.

The protein belongs to the DUP/COS family. In terms of assembly, interacts with PRM8. Binds to COPII coated vesicles.

It is found in the cell membrane. Functionally, may be involved in endoplasmic reticulum exit trafficking of proteins. This Saccharomyces cerevisiae (strain ATCC 204508 / S288c) (Baker's yeast) protein is Pheromone-regulated membrane protein 9 (PRM9).